A 613-amino-acid chain; its full sequence is Ribosome-associated molecular chaperone SSB1 (613 aa).

Positions 1-391 (MAEGVFSGAI…ILTGSNLSDD (391 aa)) are nucleotide binding domain (NBD). ATP is bound by residues 16–18 (TTY), lysine 73, 205–207 (GGT), 271–278 (ERAKRTLS), and glycine 342. The interval 392–402 (TKDLLLLDVAP) is inter-domain linker. The tract at residues 403 to 613 (LSLGVAMQGD…RVVTKAMATR (211 aa)) is substrate binding domain (SBD). Residues 516 to 612 (SEDIEKMVSQ…KRVVTKAMAT (97 aa)) form a lid domain (SBDalpha) region. The Nuclear export signal signature appears at 574–582 (VEAALADAF).

Belongs to the heat shock protein 70 family. Ssb-type Hsp70 subfamily. In terms of assembly, binds to ribosomes. Binds close to the ribosomal tunnel exit via contacts with both ribosomal proteins and rRNA. Directly interacts with nascent polypeptides. This interaction is dependent on the ribosome-associated complex (RAC). Interacts with SSE1. Interacts with FES1.

It is found in the cytoplasm. The catalysed reaction is ATP + H2O = ADP + phosphate + H(+). Functionally, ribosome-bound, Hsp70-type chaperone that assists in the cotranslational folding of newly synthesized proteins in the cytosol. Stimulates folding by interacting with nascent chains, binding to short, largely hydrophobic sequences exposed by unfolded proteins, thereby stabilizing longer, more slowly translated, and aggregation-prone nascent polypeptides and domains that cannot fold stably until fully synthesized. The Hsp70-protein substrate interaction depends on ATP-binding and on allosteric regulation between the NBD and the SBD. The ATP-bound state is characterized by a fast exchange rate of substrate (low affinity state), while in the ADP-bound state exchange is much slower (high affinity state). During the Hsp70 cycle, the chaperone switches between the ATP-bound state (open conformation) and the ADP-bound state (closed conformation) by major conformational rearrangements involving mainly the lid domain. Ssb cooperates with a specific Hsp40/Hsp70 co-chaperone termed the ribosome-associated complex (RAC), which stimulates the ATPase activity of the ribosome-associated pool of Ssbs and switches it to the high affinity substrate binding state. Hsp110 chaperone SSE1 and FES1 act as nucleotide exchange factors that cause substrate release. This is Ribosome-associated molecular chaperone SSB1 (SSB1) from Eremothecium gossypii (strain ATCC 10895 / CBS 109.51 / FGSC 9923 / NRRL Y-1056) (Yeast).